The sequence spans 518 residues: Chromosomal replication initiator protein DnaA (518 aa).

Positions 1-76 (METDGGDFPS…RALSEAYGSP (76 aa)) are domain I, interacts with DnaA modulators. The segment at 76–176 (PIRLAVTVDP…RRPTTRIENS (101 aa)) is domain II. Positions 91–174 (LTPERTGEHS…QPRRPTTRIE (84 aa)) are disordered. The span at 124–135 (DGLHLDERRSGS) shows a compositional bias: basic and acidic residues. Positions 136–147 (LEEDSPLDDSDP) are enriched in acidic residues. Residues 177 to 393 (RLNPKYIFET…GALIRVTAFA (217 aa)) are domain III, AAA+ region. 4 residues coordinate ATP: Gly-221, Gly-223, Lys-224, and Thr-225. A domain IV, binds dsDNA region spans residues 394-518 (SLNRQPVDMQ…TNRIKKQSGA (125 aa)).

This sequence belongs to the DnaA family. Oligomerizes as a right-handed, spiral filament on DNA at oriC.

Its subcellular location is the cytoplasm. In terms of biological role, plays an essential role in the initiation and regulation of chromosomal replication. ATP-DnaA binds to the origin of replication (oriC) to initiate formation of the DNA replication initiation complex once per cell cycle. Binds the DnaA box (a 9 base pair repeat at the origin) and separates the double-stranded (ds)DNA. Forms a right-handed helical filament on oriC DNA; dsDNA binds to the exterior of the filament while single-stranded (ss)DNA is stabiized in the filament's interior. The ATP-DnaA-oriC complex binds and stabilizes one strand of the AT-rich DNA unwinding element (DUE), permitting loading of DNA polymerase. After initiation quickly degrades to an ADP-DnaA complex that is not apt for DNA replication. Binds acidic phospholipids. The polypeptide is Chromosomal replication initiator protein DnaA (Kineococcus radiotolerans (strain ATCC BAA-149 / DSM 14245 / SRS30216)).